Reading from the N-terminus, the 587-residue chain is Protein SIX6OS1 (587 aa).

A disordered region spans residues 356 to 378 (TPQKQSNSNQWSEKGDKDAEYGD). Residues 357–367 (PQKQSNSNQWS) are compositionally biased toward polar residues. Basic and acidic residues predominate over residues 368 to 378 (EKGDKDAEYGD). Ser439 carries the post-translational modification Phosphoserine. Residues 568-587 (SSSLKGFSSSSQNTTQFTFF) form a disordered region.

As to quaternary structure, interacts with SYCE1. Interacts with proteasome subunit PSMA8; to participate in meiosis progression during spermatogenesis. In terms of tissue distribution, highest expression in retina, skeletal muscle, testis and colon.

It localises to the chromosome. Functionally, meiotic protein that localizes to the central element of the synaptonemal complex and is required for chromosome synapsis during meiotic recombination. Required for the appropriate processing of intermediate recombination nodules before crossover formation. This Homo sapiens (Human) protein is Protein SIX6OS1.